Consider the following 181-residue polypeptide: CD160 antigen (181 aa).

A signal peptide spans 1–24 (MLLEPGRGCCALAILLAIVDIQSG). One can recognise an Ig-like V-type domain in the interval 25–133 (GCINITSSAS…QGHFFSILFT (109 aa)). Asn-28 is a glycosylation site (N-linked (GlcNAc...) asparagine). 2 disulfides stabilise this stretch: Cys-44–Cys-112 and Cys-61–Cys-68. N-linked (GlcNAc...) asparagine glycosylation is present at Asn-137. Ser-159 carries GPI-anchor amidated serine lipidation. Positions 160-181 (SGFLQEKVWVMLVTSLVALQAL) are cleaved as a propeptide — removed in mature form.

In terms of assembly, homomultimer; disulfide-linked. Interacts with HLA-G. Interacts with HLA-A2-B2M in complex with an HIV-derived peptide. Interacts with TNFRSF14 (via cysteine-rich domain 1); this interaction is direct. Interacts with LCK and CD247/CD3 zeta chain. In terms of tissue distribution, expression is restricted to functional NK and cytotoxic T lymphocytes. Expressed in viral-specific effector memory and terminally differentiated effector memory CD8+ T cells. Expressed in memory and activated CD4+ T cell subsets (at protein level). Expressed at high levels in intraepithelial lymphocytes (at protein level). Expressed in both alpha-beta and gamma-delta CD8+ T cell subsets (at protein level). Expressed in umbilical vein endothelial cells (at protein level). Expressed in monocytes and at lower levels in B cells. Isoform 3: Expressed exclusively in activated NK cells (at protein level).

Its subcellular location is the cell membrane. It localises to the secreted. Functionally, receptor on immune cells capable to deliver stimulatory or inhibitory signals that regulate cell activation and differentiation. Exists as a GPI-anchored and as a transmembrane form, each likely initiating distinct signaling pathways via phosphoinositol 3-kinase in activated NK cells and via LCK and CD247/CD3 zeta chain in activated T cells. Receptor for both classical and non-classical MHC class I molecules. In the context of acute viral infection, recognizes HLA-C and triggers NK cell cytotoxic activity, likely playing a role in anti-viral innate immune response. On CD8+ T cells, binds HLA-A2-B2M in complex with a viral peptide and provides a costimulatory signal to activated/memory T cells. Upon persistent antigen stimulation, such as occurs during chronic viral infection, may progressively inhibit TCR signaling in memory CD8+ T cells, contributing to T cell exhaustion. On endothelial cells, recognizes HLA-G and controls angiogenesis in immune privileged sites. Receptor or ligand for TNF superfamily member TNFRSF14, participating in bidirectional cell-cell contact signaling between antigen presenting cells and lymphocytes. Upon ligation of TNFRSF14, provides stimulatory signal to NK cells enhancing IFNG production and anti-tumor immune response. On activated CD4+ T cells, interacts with TNFRSF14 and down-regulates CD28 costimulatory signaling, restricting memory and alloantigen-specific immune response. In the context of bacterial infection, acts as a ligand for TNFRSF14 on epithelial cells, triggering the production of antimicrobial proteins and pro-inflammatory cytokines. In terms of biological role, the soluble GPI-cleaved form, usually released by activated lymphocytes, might play an immune regulatory role by limiting lymphocyte effector functions. This Homo sapiens (Human) protein is CD160 antigen.